Here is a 553-residue protein sequence, read N- to C-terminus: ATP synthase F(1) complex subunit alpha, mitochondrial (553 aa).

Residues Met-1 to Leu-43 constitute a mitochondrion transit peptide. Residues Ser-53 and Ser-65 each carry the phosphoserine modification. Phosphoserine; alternate is present on Ser-76. An O-linked (GlcNAc) serine; alternate glycan is attached at Ser-76. Residue Ser-106 is modified to Phosphoserine. N6-acetyllysine occurs at positions 123, 126, and 132. Thr-134 is modified (phosphothreonine). Lys-161 is subject to N6-acetyllysine; alternate. Residue Lys-161 is modified to N6-succinyllysine; alternate. Ser-166 carries the post-translational modification Phosphoserine. Lys-167 carries the N6-acetyllysine; alternate modification. Lys-167 carries the post-translational modification N6-succinyllysine; alternate. Ser-184 carries the phosphoserine modification. Position 204 is an omega-N-methylarginine (Arg-204). 5 residues coordinate ATP: Gln-215, Gly-217, Lys-218, Thr-219, and Ser-220. Thr-219 is a binding site for Mg(2+). 2 positions are modified to N6-acetyllysine; alternate: Lys-230 and Lys-239. 2 positions are modified to N6-succinyllysine; alternate: Lys-230 and Lys-239. Position 240 is an N6-acetyllysine (Lys-240). 2 positions are modified to N6-acetyllysine; alternate: Lys-261 and Lys-305. An N6-succinyllysine; alternate mark is found at Lys-261 and Lys-305. Asp-312 is a Mg(2+) binding site. Lys-427 is modified (N6-acetyllysine; alternate). The residue at position 427 (Lys-427) is an N6-succinyllysine; alternate. Lys-434 bears the N6-acetyllysine mark. Gln-473 and Gln-475 together coordinate ATP. N6-acetyllysine; alternate occurs at positions 498, 506, 531, and 539. Residues Lys-498, Lys-506, Lys-531, and Lys-539 each carry the N6-succinyllysine; alternate modification. Position 541 is an N6-acetyllysine (Lys-541).

It belongs to the ATPase alpha/beta chains family. Homotrimer. Component of the ATP synthase complex composed at least of ATP5F1A/subunit alpha, ATP5F1B/subunit beta, ATP5MC1/subunit c (homooctomer), MT-ATP6/subunit a, MT-ATP8/subunit 8, ATP5ME/subunit e, ATP5MF/subunit f, ATP5MG/subunit g, ATP5MK/subunit k, ATP5MJ/subunit j, ATP5F1C/subunit gamma, ATP5F1D/subunit delta, ATP5F1E/subunit epsilon, ATP5PF/subunit F6, ATP5PB/subunit b, ATP5PD/subunit d, ATP5PO/subunit OSCP. ATP synthase complex consists of a soluble F(1) head domain (subunits alpha(3) and beta(3)) - the catalytic core - and a membrane F(0) domain - the membrane proton channel (subunits c, a, 8, e, f, g, k and j). These two domains are linked by a central stalk (subunits gamma, delta, and epsilon) rotating inside the F1 region and a stationary peripheral stalk (subunits F6, b, d, and OSCP). Interacts with ATPAF2. Interacts with HRG; the interaction occurs on the surface of T-cells and alters the cell morphology when associated with concanavalin (in vitro). Interacts with PLG (angiostatin peptide); the interaction inhibits most of the angiogenic properties of angiostatin. Interacts with BLOC1S1. Interacts with BCL2L1 isoform BCL-X(L); the interaction mediates the association of BCL2L1 isoform BCL-X(L) with the mitochondrial membrane F(1)F(0) ATP synthase and enhances neurons metabolic efficiency. Interacts with CLN5 and PPT1. Interacts with S100A1; this interaction increases F1-ATPase activity. Interacts with ABCB7; this interaction allows the regulation of cellular iron homeostasis and cellular reactive oxygen species (ROS) levels in cardiomyocytes. In terms of processing, acetylated on lysine residues. BLOC1S1 is required for acetylation.

The protein resides in the mitochondrion inner membrane. It is found in the cell membrane. Its function is as follows. Subunit alpha, of the mitochondrial membrane ATP synthase complex (F(1)F(0) ATP synthase or Complex V) that produces ATP from ADP in the presence of a proton gradient across the membrane which is generated by electron transport complexes of the respiratory chain. ATP synthase complex consist of a soluble F(1) head domain - the catalytic core - and a membrane F(1) domain - the membrane proton channel. These two domains are linked by a central stalk rotating inside the F(1) region and a stationary peripheral stalk. During catalysis, ATP synthesis in the catalytic domain of F(1) is coupled via a rotary mechanism of the central stalk subunits to proton translocation. In vivo, can only synthesize ATP although its ATP hydrolase activity can be activated artificially in vitro. With the catalytic subunit beta (ATP5F1B), forms the catalytic core in the F(1) domain. Subunit alpha does not bear the catalytic high-affinity ATP-binding sites. In Pongo abelii (Sumatran orangutan), this protein is ATP synthase F(1) complex subunit alpha, mitochondrial.